The primary structure comprises 84 residues: Large ribosomal subunit protein bL27 (84 aa).

Residues 1–22 (MAHKKAGGSTRNGRDSESKRLG) form a disordered region.

This sequence belongs to the bacterial ribosomal protein bL27 family.

This chain is Large ribosomal subunit protein bL27, found in Shewanella frigidimarina (strain NCIMB 400).